The primary structure comprises 181 residues: Ubiquitin-like protein 4B (181 aa).

The 76-residue stretch at 1–76 (MWLTVKLLLG…LNVIIRPLEK (76 aa)) folds into the Ubiquitin-like domain. The disordered stretch occupies residues 139 to 181 (PEGKHSGATGSTRESKGDMEPRRNMKCNLAHKDGFKREKSPGK). Basic and acidic residues-rich tracts occupy residues 151 to 161 (RESKGDMEPRR) and 168 to 181 (AHKDGFKREKSPGK).

The protein resides in the cytoplasm. The protein is Ubiquitin-like protein 4B (UBL4B) of Monodelphis domestica (Gray short-tailed opossum).